The sequence spans 359 residues: MKPPQRRRRVPARYVGEATGPTAWSPREMRHLLRLLQARRGQPEPDAAELAQELRGRSEAEICRFIQQLKGRVVREAIQKMQPGGREGPRHQGTPLPAPVEVWMDLAEKLTGPMEEALTAAFSQVLTIAAAEPLSLLHSRPGKPTKARGKALVFLSNQDGQKDPASEGSGPVPMTAADPTREASVSDPKASGANPETSGLASEVTVPDPDAPTKSLAGSSTERDLAVDFEKIYKYLSFSSRGGHGPELSAAESAVVLNLLMALPEELSHLPCTALLEHMTKTYAQLMAPQTALPGEKRPRPGTEDGGTGSTGPEEPDQASPQASEPIEPRLAWKAVGICPLNPFLVPLGLVSQAPSPSR.

Residues 1–11 (MKPPQRRRRVP) show a composition bias toward basic residues. Disordered regions lie at residues 1–22 (MKPP…TGPT), 157–221 (NQDG…GSST), and 291–327 (TALP…SEPI).

Part of the SNAPc complex composed of 5 subunits: SNAPC1, SNAPC2, SNAPC3, SNAPC4 and SNAPC5. SNAPC2 interacts with TBP and SNAPC4.

The protein resides in the nucleus. Part of the SNAPc complex required for the transcription of both RNA polymerase II and III small-nuclear RNA genes. Binds to the proximal sequence element (PSE), a non-TATA-box basal promoter element common to these 2 types of genes. Recruits TBP and BRF2 to the U6 snRNA TATA box. This chain is snRNA-activating protein complex subunit 2 (Snapc2), found in Mus musculus (Mouse).